Here is a 297-residue protein sequence, read N- to C-terminus: 1D-myo-inositol 2-acetamido-2-deoxy-alpha-D-glucopyranoside deacetylase (297 aa).

Residues H14, D17, and H149 each coordinate Zn(2+).

The protein belongs to the MshB deacetylase family. Zn(2+) is required as a cofactor.

It catalyses the reaction 1D-myo-inositol 2-acetamido-2-deoxy-alpha-D-glucopyranoside + H2O = 1D-myo-inositol 2-amino-2-deoxy-alpha-D-glucopyranoside + acetate. Its function is as follows. Catalyzes the deacetylation of 1D-myo-inositol 2-acetamido-2-deoxy-alpha-D-glucopyranoside (GlcNAc-Ins) in the mycothiol biosynthesis pathway. In Thermomonospora curvata (strain ATCC 19995 / DSM 43183 / JCM 3096 / KCTC 9072 / NBRC 15933 / NCIMB 10081 / Henssen B9), this protein is 1D-myo-inositol 2-acetamido-2-deoxy-alpha-D-glucopyranoside deacetylase.